We begin with the raw amino-acid sequence, 938 residues long: Leucine--tRNA ligase 1 (938 aa).

The 'HIGH' region signature appears at 40–50; the sequence is PYTNSPLHIGH. Positions 620-624 match the 'KMSKS' region motif; the sequence is KMSKS. Residue lysine 623 coordinates ATP.

The protein belongs to the class-I aminoacyl-tRNA synthetase family.

The protein localises to the cytoplasm. The catalysed reaction is tRNA(Leu) + L-leucine + ATP = L-leucyl-tRNA(Leu) + AMP + diphosphate. This chain is Leucine--tRNA ligase 1, found in Metallosphaera sedula (strain ATCC 51363 / DSM 5348 / JCM 9185 / NBRC 15509 / TH2).